A 432-amino-acid polypeptide reads, in one-letter code: 2-oxoglutarate-dependent dioxygenase AOP2 (432 aa).

In terms of domain architecture, Fe2OG dioxygenase spans 281–378 (SGDDVEANDD…RYTAAIFTCP (98 aa)). Positions 301, 303, and 358 each coordinate Fe cation. Residue R369 coordinates 2-oxoglutarate.

This sequence belongs to the iron/ascorbate-dependent oxidoreductase family. The cofactor is Fe(2+).

In terms of biological role, 2-oxoglutarate-dependent dioxygenase involved in glucosinolates biosynthesis. Catalyzes the conversion of methylsulfinylalkyl glucosinolates to alkenyl glucosinolates. The polypeptide is 2-oxoglutarate-dependent dioxygenase AOP2 (AOP2) (Arabidopsis thaliana (Mouse-ear cress)).